The chain runs to 198 residues: Segregation and condensation protein B (198 aa).

The interval 169-198 (LADPAAEEPDQNEMDLFFDRFNQSKEQEEE) is disordered.

Belongs to the ScpB family. In terms of assembly, homodimer. Homodimerization may be required to stabilize the binding of ScpA to the Smc head domains. Component of a cohesin-like complex composed of ScpA, ScpB and the Smc homodimer, in which ScpA and ScpB bind to the head domain of Smc. The presence of the three proteins is required for the association of the complex with DNA.

It localises to the cytoplasm. Participates in chromosomal partition during cell division. May act via the formation of a condensin-like complex containing Smc and ScpA that pull DNA away from mid-cell into both cell halves. The chain is Segregation and condensation protein B from Listeria monocytogenes serotype 4a (strain HCC23).